Consider the following 721-residue polypeptide: MKHIALLTTLLLSASLQAVEKPYDYVFFENSLMKGDYFYSQAKYTSPSWIKNARHHLPVAGSVAFTPGNSLELTYVSAPGGDWYSEIQYCPVRGNDFFREPSTLSMQVRLRESMNAAALPNIAIRYADSTYTQYLNLRNYLKDTRPGVWHPVSIPLEDFGLNAVNDTNIKKLAAVALRPGTADGNEYTIYLDDIELLPASLPSVSALNAPVLQEAKAYERHIDIKWIPQSKEDIKYYRIYRSFDGITYQPVAVRRPWMNRYTDFLGEVGKKAYYKVTAVDYALNESNDSQTVSATTYPMTDEQLLDMVQEANFRYYWEGAEPNSGLARENIPGRNDMIATGASGFGIMAIVAGIERGFITREEGVQRFLKITSFLEKADKFHGAVSHFIDGTTGKTVAFFGPKDNGGDLVETSFLFQGLLTARQYFNQENDKEKQIRKSIDNLWKNVEWSWYKQFKDSPYLYWHWSPDQAWVINHKLIGWNETMITYMLAIMGPKYGISPEMYYSGWASQEEYAQEYRADWGRVEDGKMYTNGNTYYGENLKVGVSNGGPLFFIHYSYLGLDPHKFTDKYTNYFENNQKMAKINQRYCIENQGGYVGYGEDCWGLTASDFAWNYQAQEPMPHRDNGTMAPTGALASFPYTPDASMKALRNYYRNHGSFLWGEYGFRDAFNLTVNWVSPLFMGLNQAPVTVMIENYRTNLLWNLFMSHPDVQKGIQKIQSIK.

The N-terminal stretch at 1-18 is a signal peptide; it reads MKHIALLTTLLLSASLQA. Positions 474 to 708 constitute a Glycoamylase-like domain; sequence NHKLIGWNET…LLWNLFMSHP (235 aa).

Monomer.

The protein resides in the periplasm. The enzyme catalyses [(1-&gt;2)-beta-D-glucosyl](n) + H2O = [(1-&gt;2)-beta-D-glucosyl](n-2) + sophorose. Catalyzes the hydrolysis of linear beta-1,2-glucan and beta-1,2-glucooligosaccharides with degrees of polymerization (DPs) greater than or equal to 4, to produce sophorose. The best substrates are tetra- and pentasaccharides. Acts as an exo-type enzyme that releases sophorose from the non-reducing end of the substrate. It cannot hydrolyze cyclic beta-1,2-glucans. The sequence is that of Exo beta-1,2-glucooligosaccharide sophorohydrolase (non-reducing end) from Parabacteroides distasonis (strain ATCC 8503 / DSM 20701 / CIP 104284 / JCM 5825 / NCTC 11152).